The chain runs to 744 residues: Protein zyg-11 homolog B (744 aa).

LRR repeat units lie at residues 185 to 208 (LPRLESLDISNTSITDITALLACK), 216 to 236 (MHHLKCLKMTTTQILDVVREL), and 237 to 261 (KHLNHLDISDDKQFTSDIALRLLEQ).

It belongs to the zyg-11 family. Interacts with ELOC/Elongin C. Part of an E3 ubiquitin ligase complex including ZYG11B, CUL2 and Elongin BC.

Functionally, serves as substrate adapter subunit in the E3 ubiquitin ligase complex ZYG11B-CUL2-Elongin BC. Acts redudantly with ZER1 to target substrates bearing N-terminal glycine degrons for proteasomal degradation. Involved in the clearance of proteolytic fragments generated by caspase cleavage during apoptosis since N-terminal glycine degrons are strongly enriched at caspase cleavage sites. Also important in the quality control of protein N-myristoylation in which N-terminal glycine degrons are conditionally exposed after a failure of N-myristoylation. In Mus musculus (Mouse), this protein is Protein zyg-11 homolog B.